Reading from the N-terminus, the 73-residue chain is uncharacterized protein (73 aa).

This is an uncharacterized protein from Vertebrata (FPV).